Here is a 260-residue protein sequence, read N- to C-terminus: CD320 antigen (260 aa).

Positions 1–28 (MARGGAGRAVALGLVLRLLFGLRTGLEA) are cleaved as a signal peptide. Over 29 to 208 (APAPAHTRVQ…DSSRNPSAYG (180 aa)) the chain is Extracellular. One can recognise an LDL-receptor class A 1 domain in the interval 46–83 (SCPTDTFQCLTSGYCVPLSWRCDGDQDCSDGSDEEDCR). 3 cysteine pairs are disulfide-bonded: Cys-47/Cys-60, Cys-54/Cys-73, and Cys-67/Cys-82. Trp-65, Asp-68, Asp-70, Asp-72, Asp-78, and Glu-79 together coordinate Ca(2+). An N-linked (GlcNAc...) asparagine glycan is attached at Asn-118. Residues 123 to 160 (PCQESELHCILDDVCIPHTWRCDGHPDCLDSSDELSCD) enclose the LDL-receptor class A 2 domain. Intrachain disulfides connect Cys-124–Cys-137, Cys-131–Cys-150, and Cys-144–Cys-159. The Ca(2+) site is built by Trp-142, Asp-145, His-147, Asp-149, Asp-155, and Glu-156. Asn-185 is a glycosylation site (N-linked (GlcNAc...) asparagine). The chain crosses the membrane as a helical span at residues 209 to 229 (VIAAAGVLSAILVSATLLILL). Residues 230–260 (RLRGQGYLPPPGLLVAVKESLLLSERKTSLI) are Cytoplasmic-facing.

Interacts (via LDL-receptor class A domains) with TCN2.

The protein resides in the cell membrane. Its function is as follows. Receptor for transcobalamin saturated with cobalamin (TCbl). Plays an important role in cobalamin uptake. Plasma membrane protein that is expressed on follicular dendritic cells (FDC) and mediates interaction with germinal center B cells. Functions as a costimulator to promote B cell responses to antigenic stimuli; promotes B cell differentiation and proliferation. Germinal center-B (GC-B) cells differentiate into memory B-cells and plasma cells (PC) through interaction with T-cells and follicular dendritic cells (FDC). CD320 augments the proliferation of PC precursors generated by IL-10. This Mus musculus (Mouse) protein is CD320 antigen (Cd320).